The following is a 614-amino-acid chain: MKLSWSLFCGLASLALSQFDEAPPSQSDYFVRHIPGLDSVDNYTMHSGNILTDAAHNGNLFFWLVEAQYKITERPKTIVWFNGGPGCSSMDGALLEVGPFRIVDDKLRVDPNKGSWHKYANVLFVDQPYGTGYSYSDTDSYLTGLGQVGDEMDSFMTQFLKLFPERAHDDFYLAGESYAGQYIPYIATKLQQTRTVDLKGLLIGNGWMDPANQYYQYVPYALDYGVIEKTEEHVKDLKELTDTCERAINIAKDKNNGRLPVHIRACEDIMNGIVELSRNERSAPESEGICVNYYDVSKEDKWPSCGMNWPEILPYVTDWLRQDATVQALNVNNDKQESWQECNGAVGSRMRQGNDDAAVYLLPDLLESMEILFFNGDRDLICNHYGNERMIEQLEWNGKKGWTEGLELDDWVVDGVSKGKKQSDRNLTYVRIYNASHMVPYDEPEACLTMLNDFIGVSKALSDLSGNKPGRGSENPSDLDDQKSGDQKSDDDSSSDDDDDAEHDKKIASDAMWKAYYQAGFTALIVVLIILGLAGFLFWRKNRGHIYQEETSLLGSCFGGISRWRNSSGGPLSNQQGTFDSRQRLMEPGEYYDLGEIAEEDEDAEELVIRRPEV.

The signal sequence occupies residues Met1–Ser17. Over Gln18–Gln518 the chain is Lumenal. An N-linked (GlcNAc...) asparagine glycan is attached at Asn42. Active-site residues include Ser177 and Asp379. Residues Asn426 and Asn434 are each glycosylated (N-linked (GlcNAc...) asparagine). The active site involves His437. The segment at Ser465–His503 is disordered. The span at Asp480 to Asp491 shows a compositional bias: basic and acidic residues. Residues Asp492–Ala501 are compositionally biased toward acidic residues. The helical transmembrane segment at Ala519 to Trp539 threads the bilayer. The Cytoplasmic portion of the chain corresponds to Arg540–Val614.

It belongs to the peptidase S10 family.

It localises to the golgi apparatus. It is found in the trans-Golgi network membrane. The enzyme catalyses Preferential release of a C-terminal arginine or lysine residue.. Its function is as follows. Protease with a carboxypeptidase B-like function involved in the C-terminal processing of the lysine and arginine residues from protein precursors. Promotes cell fusion and is involved in the programmed cell death. The chain is Pheromone-processing carboxypeptidase KEX1 (KEX1) from Yarrowia lipolytica (strain CLIB 122 / E 150) (Yeast).